A 594-amino-acid polypeptide reads, in one-letter code: RAS guanyl-releasing protein 2-B (594 aa).

One can recognise an N-terminal Ras-GEF domain in the interval 3-121; that stretch reads SSDLDKGLTI…SLIDIESVPS (119 aa). One can recognise a Ras-GEF domain in the interval 149–382; that stretch reads DPAELAEHLT…YQLSLQREPR (234 aa). The tract at residues 377-403 is disordered; sequence LQREPRARSTQTHAKSPPSPSPPLEEW. EF-hand domains are found at residues 418 to 453 and 455 to 482; these read HIEKMVESVFRLFDEDGDGHISQEEFQSVRSNFPYL and AFNEIDQNQDGKISKQEMTSYFLRASSV. Ca(2+) is bound by residues aspartate 431, aspartate 433, aspartate 435, histidine 437, glutamate 442, aspartate 460, asparagine 462, aspartate 464, lysine 466, and glutamate 471. The Phorbol-ester/DAG-type zinc-finger motif lies at 490–540; it reads IHNFAERTFLRPVSCQHCRNLILGIYKKGLKCKACGITCHKHCRDHLSIEC.

Belongs to the RASGRP family.

It localises to the cytoplasm. It is found in the cytosol. The protein resides in the cell membrane. Its subcellular location is the synapse. The protein localises to the synaptosome. Functions as a calcium- and DAG-regulated nucleotide exchange factor specifically activating Rap through the exchange of bound GDP for GTP. May function in cell aggregation and adhesion. The protein is RAS guanyl-releasing protein 2-B (rasgrp2-b) of Xenopus laevis (African clawed frog).